The sequence spans 257 residues: L-aspartate dehydrogenase (257 aa).

NAD(+)-binding residues include A124 and N180. The active site involves H208.

It belongs to the L-aspartate dehydrogenase family.

It catalyses the reaction L-aspartate + NADP(+) + H2O = oxaloacetate + NH4(+) + NADPH + H(+). The catalysed reaction is L-aspartate + NAD(+) + H2O = oxaloacetate + NH4(+) + NADH + H(+). It participates in cofactor biosynthesis; NAD(+) biosynthesis; iminoaspartate from L-aspartate (dehydrogenase route): step 1/1. Its function is as follows. Specifically catalyzes the NAD or NADP-dependent dehydrogenation of L-aspartate to iminoaspartate. The chain is L-aspartate dehydrogenase from Methanothermobacter thermautotrophicus (strain ATCC 29096 / DSM 1053 / JCM 10044 / NBRC 100330 / Delta H) (Methanobacterium thermoautotrophicum).